Consider the following 113-residue polypeptide: Cell division protein FtsB (113 aa).

The Cytoplasmic portion of the chain corresponds to 1 to 3 (MRL). The helical transmembrane segment at 4–21 (ISLLLFVLLLAIQYPLWL) threads the bilayer. The Periplasmic portion of the chain corresponds to 22 to 113 (GKGGWLRVWE…PNSPAATGRH (92 aa)). Residues 34 to 63 (HQVQEQATRNQMLKLRNAKLEGEVKDLQDG) adopt a coiled-coil conformation. The disordered stretch occupies residues 93–113 (KVSATPPLPPPPNSPAATGRH).

Belongs to the FtsB family. Part of a complex composed of FtsB, FtsL and FtsQ.

The protein resides in the cell inner membrane. Its function is as follows. Essential cell division protein. May link together the upstream cell division proteins, which are predominantly cytoplasmic, with the downstream cell division proteins, which are predominantly periplasmic. In Cupriavidus pinatubonensis (strain JMP 134 / LMG 1197) (Cupriavidus necator (strain JMP 134)), this protein is Cell division protein FtsB.